Consider the following 362-residue polypeptide: 3-isopropylmalate dehydrogenase (362 aa).

Residue 78–91 (GPQWDTLPSDKRPE) coordinates NAD(+). Arg98, Arg108, Arg136, and Asp226 together coordinate substrate. 3 residues coordinate Mg(2+): Asp226, Asp250, and Asp254. 284–296 (GSAPDIAGQDKAN) contacts NAD(+).

It belongs to the isocitrate and isopropylmalate dehydrogenases family. LeuB type 1 subfamily. In terms of assembly, homodimer. The cofactor is Mg(2+). It depends on Mn(2+) as a cofactor.

It localises to the cytoplasm. It carries out the reaction (2R,3S)-3-isopropylmalate + NAD(+) = 4-methyl-2-oxopentanoate + CO2 + NADH. It functions in the pathway amino-acid biosynthesis; L-leucine biosynthesis; L-leucine from 3-methyl-2-oxobutanoate: step 3/4. Functionally, catalyzes the oxidation of 3-carboxy-2-hydroxy-4-methylpentanoate (3-isopropylmalate) to 3-carboxy-4-methyl-2-oxopentanoate. The product decarboxylates to 4-methyl-2 oxopentanoate. The sequence is that of 3-isopropylmalate dehydrogenase from Gloeobacter violaceus (strain ATCC 29082 / PCC 7421).